A 252-amino-acid polypeptide reads, in one-letter code: Glucosamine-6-phosphate deaminase (252 aa).

The active-site Proton acceptor; for enolization step is the aspartate 67. Asparagine 137 serves as the catalytic For ring-opening step. Histidine 139 acts as the Proton acceptor; for ring-opening step in catalysis. Glutamate 144 functions as the For ring-opening step in the catalytic mechanism.

This sequence belongs to the glucosamine/galactosamine-6-phosphate isomerase family. NagB subfamily.

It carries out the reaction alpha-D-glucosamine 6-phosphate + H2O = beta-D-fructose 6-phosphate + NH4(+). The protein operates within amino-sugar metabolism; N-acetylneuraminate degradation; D-fructose 6-phosphate from N-acetylneuraminate: step 5/5. In terms of biological role, catalyzes the reversible isomerization-deamination of glucosamine 6-phosphate (GlcN6P) to form fructose 6-phosphate (Fru6P) and ammonium ion. The polypeptide is Glucosamine-6-phosphate deaminase (Staphylococcus aureus (strain Mu3 / ATCC 700698)).